A 391-amino-acid polypeptide reads, in one-letter code: MDKIGVLLMNLGGPERITDVGPFLYNLFSDPEIIRTPFPVFQKPLAWLISTLRSTTSQQAYLSIGGGSPIRRITEQQARELQSKLRDKGLNATTYIAMRYWHPFTESAIADMKADGIDQVVVIPLYPHFSISTSGSSFRELKKLRDADDEFKRVPMRCVRSWFSQSGYLKSMVELISEQISLCELPSKAHIFFTAHGVPKSYVEEAGDPYKQQIEDCSLLIINELEKCLGHTNPHTLSYQSRVGPVEWLKPYTEEVLADLGRSNVNDLIVVPISFVGEHIETLQEIDIEYKEIAEKAGIKNFRRVKALNTHPTFIEGLSDLVISCLEGPQVNLEEASKLPEKVKLYPQEKWQWGWNNSSEVWNGRVAMIIFLVLFIELISGSGPLHKLGIL.

H196 and E281 together coordinate Fe cation.

It belongs to the ferrochelatase family.

The protein resides in the cytoplasm. The catalysed reaction is heme b + 2 H(+) = protoporphyrin IX + Fe(2+). It functions in the pathway porphyrin-containing compound metabolism; protoheme biosynthesis; protoheme from protoporphyrin-IX: step 1/1. In terms of biological role, catalyzes the ferrous insertion into protoporphyrin IX. The sequence is that of Ferrochelatase from Prochlorococcus marinus (strain AS9601).